A 315-amino-acid polypeptide reads, in one-letter code: T cell receptor beta chain MC.7.G5 (315 aa).

The N-terminal stretch at 1-21 is a signal peptide; sequence MTIRLLCYMGFYFLGAGLMEA. The Ig-like V-type domain maps to 22–114; it reads DIYQTPRYLV…TSQYLCASSE (93 aa). Residues 22–114 are t cell receptor beta variable 25-1; the sequence is DIYQTPRYLV…TSQYLCASSE (93 aa). C42 and C110 are disulfide-bonded. Residues 46 to 50 form a CDR1 region; it reads MGHDK. The CDR2 stretch occupies residues 68-73; it reads SYGVNS. N72 carries N-linked (GlcNAc...) asparagine glycosylation. Residues 110–127 form a CDR3 region; sequence CASSEARGLAEFTDTQYF. The segment at 122–136 is t cell receptor beta joining 2-3; it reads TDTQYFGPGTRLTVL. The segment at 138–315 is t cell receptor beta constant 2; sequence DLKNVFPPEV…AMVKRKDSRG (178 aa). The 110-residue stretch at 145–254 folds into the Ig-like C1-type domain; that stretch reads PEVAVFEPSE…WTQDRAKPVT (110 aa). A disulfide bridge links C167 with C232. An N-linked (GlcNAc...) asparagine glycan is attached at N206. Positions 267-281 are connecting peptide; that stretch reads CGFTSESYQQGVLSA. Residues 282-304 traverse the membrane as a helical segment; that stretch reads TILYEILLGKATLYAVLVSALVL. At 305-315 the chain is on the cytoplasmic side; sequence MAMVKRKDSRG.

Disulfide-linked heterodimer with TRAV38-2DV8*01J31*01C*01 alpha chain. The alpha-beta TR associates with the transmembrane signaling CD3 coreceptor proteins to form the TR-CD3 (TCR). The assembly of alpha-beta TR heterodimers with CD3 occurs in the endoplasmic reticulum where a single alpha-beta TR heterodimer associates with one CD3D-CD3E heterodimer, one CD3G-CD3E heterodimer and one CD247 homodimer forming a stable octameric structure. CD3D-CD3E and CD3G-CD3E heterodimers preferentially associate with TR alpha and TR beta chains (via TM domain), respectively. The association of the CD247 homodimer is the last step of TCR assembly in the endoplasmic reticulum and is required for transport to the cell surface. Expressed in MR1-restricted CD8-positive T cells.

The protein localises to the cell membrane. Functionally, the beta chain of TRAV38-2DV8*01J31*01C*01/TRBV25-1*01J2S3*01C2*01 alpha-beta T cell receptor (TR) clonotype that displays pan-cancer cell recognition via the invariant MR1 molecule. On CD8-positive T cell clone MC.7.G5, likely recognizes tumor-specific or -associated metabolite(s) essential for cancer cell survival, triggering killing of many cancer cell types including lung, melanoma, leukemia, colon, breast, prostate, bone and ovarian cancer cells. Mediates cancer cell cytotoxicity in an HLA-independent manner. Has no reactivity to healthy cells even stressed or infected by bacteria. Antigen recognition initiates TR-CD3 clustering on the cell surface and intracellular activation of LCK that phosphorylates the ITAM motifs of CD3G, CD3D, CD3E and CD247 enabling the recruitment of ZAP70. In turn, ZAP70 phosphorylates LAT, which recruits numerous signaling molecules to form the LAT signalosome. The LAT signalosome propagates signal branching to three major signaling pathways, the calcium, the mitogen-activated protein kinase (MAPK) kinase and the nuclear factor NF-kappa-B (NF-kB) pathways, leading to the mobilization of transcription factors that are critical for gene expression and essential for T cell differentiation into effector/memory T cells. The chain is T cell receptor beta chain MC.7.G5 from Homo sapiens (Human).